The following is a 276-amino-acid chain: 3-methyl-2-oxobutanoate hydroxymethyltransferase (276 aa).

2 residues coordinate Mg(2+): Asp-49 and Asp-88. Residues Asp-49 to Ser-50, Asp-88, and Lys-118 each bind 3-methyl-2-oxobutanoate. Glu-120 lines the Mg(2+) pocket. The active-site Proton acceptor is the Glu-187.

Belongs to the PanB family. Homodecamer; pentamer of dimers. Requires Mg(2+) as cofactor.

It is found in the cytoplasm. The enzyme catalyses 3-methyl-2-oxobutanoate + (6R)-5,10-methylene-5,6,7,8-tetrahydrofolate + H2O = 2-dehydropantoate + (6S)-5,6,7,8-tetrahydrofolate. It functions in the pathway cofactor biosynthesis; (R)-pantothenate biosynthesis; (R)-pantoate from 3-methyl-2-oxobutanoate: step 1/2. Functionally, catalyzes the reversible reaction in which hydroxymethyl group from 5,10-methylenetetrahydrofolate is transferred onto alpha-ketoisovalerate to form ketopantoate. The chain is 3-methyl-2-oxobutanoate hydroxymethyltransferase from Afipia carboxidovorans (strain ATCC 49405 / DSM 1227 / KCTC 32145 / OM5) (Oligotropha carboxidovorans).